The primary structure comprises 512 residues: 2,3-bisphosphoglycerate-independent phosphoglycerate mutase (512 aa).

The Mn(2+) site is built by D11 and S61. S61 functions as the Phosphoserine intermediate in the catalytic mechanism. Substrate contacts are provided by residues H122, 152-153, R184, R190, 259-262, and K332; these read RD and RADR. D399, H403, D440, H441, and H459 together coordinate Mn(2+).

The protein belongs to the BPG-independent phosphoglycerate mutase family. Monomer. It depends on Mn(2+) as a cofactor.

It catalyses the reaction (2R)-2-phosphoglycerate = (2R)-3-phosphoglycerate. Its pathway is carbohydrate degradation; glycolysis; pyruvate from D-glyceraldehyde 3-phosphate: step 3/5. Catalyzes the interconversion of 2-phosphoglycerate and 3-phosphoglycerate. The chain is 2,3-bisphosphoglycerate-independent phosphoglycerate mutase from Francisella tularensis subsp. tularensis (strain WY96-3418).